The sequence spans 405 residues: Tryptophan synthase beta chain (405 aa).

K95 is modified (N6-(pyridoxal phosphate)lysine).

This sequence belongs to the TrpB family. Tetramer of two alpha and two beta chains. Pyridoxal 5'-phosphate serves as cofactor.

The catalysed reaction is (1S,2R)-1-C-(indol-3-yl)glycerol 3-phosphate + L-serine = D-glyceraldehyde 3-phosphate + L-tryptophan + H2O. It participates in amino-acid biosynthesis; L-tryptophan biosynthesis; L-tryptophan from chorismate: step 5/5. Its function is as follows. The beta subunit is responsible for the synthesis of L-tryptophan from indole and L-serine. The polypeptide is Tryptophan synthase beta chain (Pseudomonas entomophila (strain L48)).